Reading from the N-terminus, the 402-residue chain is NADH-quinone oxidoreductase subunit D (402 aa).

It belongs to the complex I 49 kDa subunit family. As to quaternary structure, NDH-1 is composed of 14 different subunits. Subunits NuoB, C, D, E, F, and G constitute the peripheral sector of the complex.

The protein localises to the cell inner membrane. It catalyses the reaction a quinone + NADH + 5 H(+)(in) = a quinol + NAD(+) + 4 H(+)(out). Functionally, NDH-1 shuttles electrons from NADH, via FMN and iron-sulfur (Fe-S) centers, to quinones in the respiratory chain. The immediate electron acceptor for the enzyme in this species is believed to be ubiquinone. Couples the redox reaction to proton translocation (for every two electrons transferred, four hydrogen ions are translocated across the cytoplasmic membrane), and thus conserves the redox energy in a proton gradient. The protein is NADH-quinone oxidoreductase subunit D of Azorhizobium caulinodans (strain ATCC 43989 / DSM 5975 / JCM 20966 / LMG 6465 / NBRC 14845 / NCIMB 13405 / ORS 571).